Here is a 565-residue protein sequence, read N- to C-terminus: Pentatricopeptide repeat-containing protein At3g20730 (565 aa).

PPR repeat units lie at residues 12–46 (SPSLYLKALKLCSYQNVKKQLLLIHGNSITNGFCS), 47–77 (NLQLKDMLIDLYLKQGDVKHARKLFDRISKR), 78–112 (DVVSWTAMISRFSRCGYHPDALLLFKEMHREDVKA), 113–147 (NQFTYGSVLKSCKDLGCLKEGMQIHGSVEKGNCAG), 148–178 (NLIVRSALLSLYARCGKMEEARLQFDSMKER), 179–213 (DLVSWNAMIDGYTANACADTSFSLFQLMLTEGKKP), 214–248 (DCFTFGSLLRASIVVKCLEIVSELHGLAIKLGFGR), 249–279 (SSALIRSLVNAYVKCGSLANAWKLHEGTKKR), 280–315 (DLLSCTALITGFSQQNNCTSDAFDIFKDMIRMKTKM), 316–351 (DEVVVSSMLKICTTIASVTIGRQIHGFALKSSQIRF), 352–382 (DVALGNSLIDMYAKSGEIEDAVLAFEEMKEK), 383–417 (DVRSWTSLIAGYGRHGNFEKAIDLYNRMEHERIKP), 418–448 (NDVTFLSLLSACSHTGQTELGWKIYDTMINK), and 454–484 (REEHLSCIIDMLARSGYLEEAYALIRSKEGI). A type E motif; degenerate region spans residues 491 to 565 (TWGAFLDACR…NKAPGYSLVY (75 aa)).

Belongs to the PPR family. PCMP-E subfamily.

The sequence is that of Pentatricopeptide repeat-containing protein At3g20730 (PCMP-E94) from Arabidopsis thaliana (Mouse-ear cress).